Reading from the N-terminus, the 219-residue chain is GTP-binding protein drn-1 (219 aa).

GTP contacts are provided by residues 37-44 (GAGGVGKS), 56-62 (NENYVPT), 85-89 (DTTGS), 146-149 (NKKD), and 177-178 (AK). The Effector region motif lies at 59–67 (YVPTIEDTY). Cysteine methyl ester is present on cysteine 216. Cysteine 216 is lipidated: S-geranylgeranyl cysteine. The propeptide at 217–219 (HIM) is removed in mature form.

Belongs to the small GTPase superfamily. Di-Ras family. Interacts with epac-1 (via C-terminus). In terms of tissue distribution, expressed specifically in neurons including the nerve ring, ventral and dorsal nerve cord motor neurons and tail ganglia.

It is found in the cell membrane. Functionally, displays low GTPase activity and exists predominantly in the GTP-bound form. Together with epac-1, may regulate acetylcholine release at the neuromuscular junctions probably downstream of G-protein gsa-1 and adenylate cyclase acy-1. This chain is GTP-binding protein drn-1, found in Caenorhabditis elegans.